Consider the following 349-residue polypeptide: MIRVAVIGGSGYTGGELLRILAVHPKIEVTYVTSREYAGKPITLVHPNLRGFYNMNFSQFSFDKLGDKADAVFLGLPHKVSLEYVPKILEMGIQVIDLSADFRLKDPTLYKIWYGYEHPYPDLLKKAVYGLPELHYEELKNAKLIASPGCNATATILAGAPLVASSLLETYKLISDVKVGSSEGGAKPHEGSHHPERQNAIRPYEADGHRHAAEAEQELSLIAKRDVKVSLVPHAVSSVRGALASVHGWLSSDISEMDMWKKSIEFYKGRKFIRIIRSNIHPYPDPKFVIGSNFADIGFAIEKRMQRITMFSAIDNLMKGAAGQAVQAFNISRGFEEDEGLRIPPLRPA.

Residue 10 to 13 (SGYT) coordinates NADP(+). Residue Cys-150 is part of the active site. An NADP(+)-binding site is contributed by Asn-316.

Belongs to the NAGSA dehydrogenase family. Type 1 subfamily. LysY sub-subfamily.

Its subcellular location is the cytoplasm. The catalysed reaction is [amino-group carrier protein]-C-terminal-N-(1-carboxy-5-oxopentan-1-yl)-L-glutamine + phosphate + NADP(+) = [amino-group carrier protein]-C-terminal-N-(1-carboxy-5-phosphooxy-5-oxopentan-1-yl)-L-glutamine + NADPH + H(+). The enzyme catalyses [amino-group carrier protein]-C-terminal-gamma-(L-glutamyl-5-semialdehyde)-L-glutamate + phosphate + NADP(+) = [amino-group carrier protein]-C-terminal-gamma-(5-phospho-L-glutamyl)-L-glutamate + NADPH + H(+). The protein operates within amino-acid biosynthesis; L-lysine biosynthesis via AAA pathway; L-lysine from L-alpha-aminoadipate (Thermus route): step 3/5. It functions in the pathway amino-acid biosynthesis; L-arginine biosynthesis. Its function is as follows. Involved in both the arginine and lysine biosynthetic pathways. The sequence is that of [LysW]-L-2-aminoadipate/[LysW]-L-glutamate phosphate reductase from Sulfurisphaera tokodaii (strain DSM 16993 / JCM 10545 / NBRC 100140 / 7) (Sulfolobus tokodaii).